The following is a 1249-amino-acid chain: Apoptotic protease-activating factor 1 (1249 aa).

One can recognise a CARD domain in the interval 1-90 (MDAKARNCLL…KDLAALLQSG (90 aa)). The NB-ARC domain maps to 106–415 (ITSFVRTVLC…LETEEVEDIL (310 aa)). Residues 154–161 (GMAGCGKS) and arginine 265 contribute to the ATP site. The WD 1-1 repeat unit spans residues 613–652 (PHTDAVYHACFSQDGQRIASCGADKTLQVFKAETGEKLLD). Residues 655-694 (AHEDEVLCCAFSSDDSYIATCSADKKVKIWDSATGKLVHT) form a WD 1-2 repeat. One copy of the WD 1-3 repeat lies at 697–738 (EHSEQVNCCHFTNKSNHLLLATGSNDFFLKLWDLNQKECRNT). Residues 741–780 (GHTNSVNHCRFSPDDELLASCSADGTLRLWDVRSANERKS) form a WD 1-4 repeat. Residues 796–837 (DVEVIVKCCSWSADGDKIIVAAKNKVLLFDIHTSGLLAEIHT) form a WD 1-5 repeat. The stretch at 838-877 (GHHSTIQYCDFSPYDHLAVIALSQYCVELWNIDSRLKVAD) is one WD 1-6 repeat. A WD 1-7 repeat occupies 880-910 (GHLSWVHGVMFSPDGSSFLTASDDQTIRVWE). Residues 910-921 (ETKKVCKNSAIV) are interpropeller linker. A WD 2-1 repeat occupies 922–958 (LKQEIDVVFQENETMVLAVDNIRGLQLIAGKTGQIDY). The stretch at 959–998 (LPEAQVSCCCLSPHLEYVAFGDEDGAIKIIELPNNRVFSS) is one WD 2-2 repeat. A WD 2-3 repeat occupies 1001 to 1040 (GHKKAVRHIQFTADGKTLISSSEDSVIQVWNWQTGDYVFL). One copy of the WD 2-4 repeat lies at 1042–1080 (AHQETVKDFRLLQDSRLLSWSFDGTVKVWNVITGRIERD). One copy of the WD 2-5 repeat lies at 1083–1122 (CHQGTVLSCAISSDATKFSSTSADKTAKIWSFDLLSPLHE). Residues 1125-1164 (GHNGCVRCSAFSLDGILLATGDDNGEIRIWNVSDGQLLHS) form a WD 2-6 repeat. One copy of the WD 2-7 repeat lies at 1176–1213 (THGGWVTDVCFSPDSKTLVSAGGYLKWWNVATGDSSQT). A WD 2-8 repeat occupies 1214 to 1249 (FYTNGTNLKKIHVSPDFRTYVTVDNLGILYILQVLE).

As to quaternary structure, monomer. Oligomerizes to a heptameric ring, known as the apoptosome, upon binding of cytochrome c and dATP. Oligomeric Apaf-1 and pro-caspase-9 bind to each other via their respective NH2-terminal CARD domains and consecutively mature caspase-9 is released from the complex. Interacts with UACA. It may also interact with Bcl-XL. Interacts with APIP. Interacts (via CARD and NACHT domains) with NAIP/BIRC1 (via NACHT domain). Interacts with CIAO2A. Highly expressed in lung and spleen, weakly in brain and kidney and not detectable in liver.

The protein resides in the cytoplasm. Functionally, oligomeric Apaf-1 mediates the cytochrome c-dependent autocatalytic activation of pro-caspase-9 (Apaf-3), leading to the activation of caspase-3 and apoptosis. This activation requires ATP. In Mus musculus (Mouse), this protein is Apoptotic protease-activating factor 1 (Apaf1).